We begin with the raw amino-acid sequence, 642 residues long: Influenza virus NS1A-binding protein (642 aa).

One can recognise a BTB domain in the interval 1-131 (MIPNGYLMFE…GDYLLSRMDV (131 aa)). The BACK domain occupies 132–350 (TSCISYRNFA…MQQDELIEKP (219 aa)). The sufficient for AHR interaction and signaling stretch occupies residues 164 to 368 (ISEEEEFLKL…SGLGTAEMNG (205 aa)). Residues Ser-246, Ser-277, Ser-322, Ser-336, and Ser-338 each carry the phosphoserine modification. Residues 257–281 (KPPRENGHKQISSSSTGCLSSPNAT) form a disordered region. Polar residues predominate over residues 265 to 281 (KQISSSSTGCLSSPNAT). 6 Kelch repeats span residues 384 to 421 (TVECYNPHTDHWSFLAPMRTPRARFQMAVLMGQLYVVG), 432 to 469 (CGEMYDSNIDDWIPVPELRTNRCNAGVCALNGKLYIVG), 481 to 518 (NCDVFDPVTKLWTSCAPLNIRRHQSAVCELGGYLYIIG), 527 to 565 (NTVERYNPENNTWTLIAPMNVARRGAGVAVLNGKLFVCG), 575 to 612 (CVEMYDPTRNEWKMMGNMTSPRSNAGIATVGNTIYAVG), and 622 to 642 (TVEVYNLESNEWSPYTKIFQF).

Belongs to the BTB-kelch protein family. Homodimer; through the BTB domain. Interacts with AHR/Aryl hydrocarbon receptor. Interacts (via BACK domain) with pre-mRNA-binding protein HNRNPK; the interaction is direct. Interacts (via BACK domain) with splicing factor PTBP1; the interaction is direct. Interacts (via Kelch repeats) with RNA polymerase POLR2A (via C-terminal domain). Interacts (via BACK domain) with splicing factor SNRPA; the interaction is indirect. Interacts (via Kelch repeats) with splicing factor SART1. Interacts (via BACK domain) with ALYREF; the interaction is indirect and likely plays a role in mRNA nuclear export. Interacts (via Kelch repeats) with KLHL20 (via Kelch repeats); this interaction blocks the assembly of Cul3-KLHL20 complex. In terms of assembly, (Microbial infection) Interacts (via BACK domain) with influenza A virus non-structural protein 1 (NS1); the interaction is direct and bridges the interaction between NS1 and HNRNPK.

It is found in the cytoplasm. The protein localises to the cytoskeleton. The protein resides in the nucleus. It localises to the nucleoplasm. Its function is as follows. Involved in many cell functions, including pre-mRNA splicing, the aryl hydrocarbon receptor (AHR) pathway, F-actin organization and protein ubiquitination. Plays a role in the dynamic organization of the actin skeleton as a stabilizer of actin filaments by association with F-actin through Kelch repeats. Protects cells from cell death induced by actin destabilization. Functions as modifier of the AHR/Aryl hydrocarbon receptor pathway increasing the concentration of AHR available to activate transcription. In addition, functions as a negative regulator of BCR(KLHL20) E3 ubiquitin ligase complex to prevent ubiquitin-mediated proteolysis of PML and DAPK1, two tumor suppressors. Inhibits pre-mRNA splicing (in vitro). May play a role in mRNA nuclear export. Functionally, (Microbial infection) Involved in the alternative splicing of influenza A virus M1 mRNA through interaction with HNRNPK, thereby facilitating the generation of viral M2 protein. The BTB and Kelch domains are required for splicing activity. Promotes export of viral M mRNA and RNP via its interaction with mRNA export factor ALYREF. The protein is Influenza virus NS1A-binding protein of Homo sapiens (Human).